A 552-amino-acid chain; its full sequence is FERRY endosomal RAB5 effector complex subunit 3 (552 aa).

Positions L383 to A403 are disordered.

In terms of assembly, component of the FERRY complex composed of five subunits, TBCK, PPP1R21, FERRY3, CRYZL1 and GATD1 with a ratio of 1:2:1:2:4, respectively.

It is found in the cytoplasm. It localises to the early endosome. In terms of biological role, component of the FERRY complex (Five-subunit Endosomal Rab5 and RNA/ribosome intermediary). The FERRY complex directly interacts with mRNAs and RAB5A, and functions as a RAB5A effector involved in the localization and the distribution of specific mRNAs most likely by mediating their endosomal transport. The complex recruits mRNAs and ribosomes to early endosomes through direct mRNA-interaction. Plays a role in mast cell degranulation. This Pongo abelii (Sumatran orangutan) protein is FERRY endosomal RAB5 effector complex subunit 3.